The following is a 340-amino-acid chain: Glycerol-3-phosphate dehydrogenase [NAD(P)+] (340 aa).

The NADPH site is built by Ser13, Trp14, and Lys108. Positions 108, 139, and 141 each coordinate sn-glycerol 3-phosphate. Residue Ala143 participates in NADPH binding. Residues Lys194, Asp247, Ser257, Arg258, and Asn259 each coordinate sn-glycerol 3-phosphate. The active-site Proton acceptor is Lys194. Arg258 contributes to the NADPH binding site. Val282 and Glu284 together coordinate NADPH.

Belongs to the NAD-dependent glycerol-3-phosphate dehydrogenase family.

It is found in the cytoplasm. The enzyme catalyses sn-glycerol 3-phosphate + NAD(+) = dihydroxyacetone phosphate + NADH + H(+). It catalyses the reaction sn-glycerol 3-phosphate + NADP(+) = dihydroxyacetone phosphate + NADPH + H(+). It participates in membrane lipid metabolism; glycerophospholipid metabolism. In terms of biological role, catalyzes the reduction of the glycolytic intermediate dihydroxyacetone phosphate (DHAP) to sn-glycerol 3-phosphate (G3P), the key precursor for phospholipid synthesis. This Streptococcus sanguinis (strain SK36) protein is Glycerol-3-phosphate dehydrogenase [NAD(P)+].